The chain runs to 350 residues: Small ribosomal subunit biogenesis GTPase RsgA (350 aa).

Positions 1 to 17 are enriched in polar residues; the sequence is MSKNKLSKGQQRRVNAN. Positions 1–33 are disordered; sequence MSKNKLSKGQQRRVNANHQRRLKTSKEKPDYDD. A CP-type G domain is found at 104–273; the sequence is TSVLTRPDFY…VIDSPGVREF (170 aa). Residues 160–163 and 214–222 contribute to the GTP site; these read NKID and GQSGVGKSS. Zn(2+)-binding residues include Cys-297, Cys-302, His-304, and Cys-310.

The protein belongs to the TRAFAC class YlqF/YawG GTPase family. RsgA subfamily. Monomer. Associates with 30S ribosomal subunit, binds 16S rRNA. Zn(2+) serves as cofactor.

It localises to the cytoplasm. Functionally, one of several proteins that assist in the late maturation steps of the functional core of the 30S ribosomal subunit. Helps release RbfA from mature subunits. May play a role in the assembly of ribosomal proteins into the subunit. Circularly permuted GTPase that catalyzes slow GTP hydrolysis, GTPase activity is stimulated by the 30S ribosomal subunit. This is Small ribosomal subunit biogenesis GTPase RsgA from Shigella boydii serotype 18 (strain CDC 3083-94 / BS512).